The sequence spans 358 residues: Tribbles homolog 3 (358 aa).

Positions M1–T54 are disordered. The tract at residues M1–L127 is interaction with DDIT3/CHOP. Position 12 is a phosphoserine (S12). Over residues P41–T54 the composition is skewed to pro residues. The region spanning L68 to R316 is the Protein kinase domain.

The protein belongs to the protein kinase superfamily. CAMK Ser/Thr protein kinase family. Tribbles subfamily. In terms of assembly, interacts with AKT1, AKT2, MAP2K1 and MAP2K7. Interacts with ATF4. Interacts with DDIT3/CHOP and inhibits its interaction with EP300/P300. Interacts with APOBEC3C. Interacts (via N-terminus) with APOBEC3A. Interacts with RELA. As to expression, highest expression in liver, pancreas, peripheral blood leukocytes and bone marrow. Also highly expressed in a number of primary lung, colon and breast tumors. Expressed in spleen, thymus, and prostate and is undetectable in other examined tissues, including testis, ovary, small intestine, colon, leukocyte, heart, brain, placenta, lung, skeletal muscle, and kidney.

It is found in the nucleus. Inactive protein kinase which acts as a regulator of the integrated stress response (ISR), a process for adaptation to various stress. Inhibits the transcriptional activity of DDIT3/CHOP and is involved in DDIT3/CHOP-dependent cell death during ER stress. May play a role in programmed neuronal cell death but does not appear to affect non-neuronal cells. Acts as a negative feedback regulator of the ATF4-dependent transcription during the ISR: while TRIB3 expression is promoted by ATF4, TRIB3 protein interacts with ATF4 and inhibits ATF4 transcription activity. Disrupts insulin signaling by binding directly to Akt kinases and blocking their activation. May bind directly to and mask the 'Thr-308' phosphorylation site in AKT1. Interacts with the NF-kappa-B transactivator p65 RELA and inhibits its phosphorylation and thus its transcriptional activation activity. Interacts with MAPK kinases and regulates activation of MAP kinases. Can inhibit APOBEC3A editing of nuclear DNA. In Homo sapiens (Human), this protein is Tribbles homolog 3 (TRIB3).